The sequence spans 417 residues: Gamma-glutamyl phosphate reductase (417 aa).

The protein belongs to the gamma-glutamyl phosphate reductase family.

It localises to the cytoplasm. The catalysed reaction is L-glutamate 5-semialdehyde + phosphate + NADP(+) = L-glutamyl 5-phosphate + NADPH + H(+). Its pathway is amino-acid biosynthesis; L-proline biosynthesis; L-glutamate 5-semialdehyde from L-glutamate: step 2/2. In terms of biological role, catalyzes the NADPH-dependent reduction of L-glutamate 5-phosphate into L-glutamate 5-semialdehyde and phosphate. The product spontaneously undergoes cyclization to form 1-pyrroline-5-carboxylate. The sequence is that of Gamma-glutamyl phosphate reductase from Escherichia coli O81 (strain ED1a).